Reading from the N-terminus, the 284-residue chain is GPN-loop GTPase 3 (284 aa).

Residue 13–18 (GSGKST) coordinates GTP. Positions 72–74 (GPN) match the Gly-Pro-Asn (GPN)-loop; involved in dimer interface motif. 174–177 (TKMD) is a GTP binding site. The segment at 262 to 284 (EPREHEEESSSMFDEYFQERQNE) is disordered.

This sequence belongs to the GPN-loop GTPase family. In terms of assembly, heterodimer with GPN1. Binds to RNA polymerase II (RNAPII). Interacts directly with subunits RPB4 and RPB7 and the CTD of RPB1.

Functionally, small GTPase required for proper localization of RNA polymerase II (RNAPII). May act at an RNAP assembly step prior to nuclear import. In Mus musculus (Mouse), this protein is GPN-loop GTPase 3.